Reading from the N-terminus, the 227-residue chain is MPEINTSHLDEKQVQLLAEMCILIDENDNKIGADTKKNCHLNENIDKGLLHRAFSVFLFNTENKLLLQQRSDAKITFPGCFTNSCCSHPLSNPGELEENNAIGVKRAAKRRLKAELGIPLEEVDLNEMDYLTRIYYKAQSDGIWGEHEVDYILFLRKNVTLNPDPNEIKSYCYVSKEEVREILKKAASGEIKLTPWFKIIADTFLFKWWDNLNHLSPFVDHEKIHRL.

Lysine 36 serves as a coordination point for substrate. Histidine 40 and histidine 51 together coordinate Mg(2+). The 151-residue stretch at leucine 49–isoleucine 199 folds into the Nudix hydrolase domain. Substrate-binding residues include arginine 70 and lysine 74. Residue cysteine 86 is part of the active site. Residue serine 87 participates in substrate binding. Residues glutamate 146 and glutamate 148 each coordinate Mg(2+). The active site involves glutamate 148. An N6-acetyllysine modification is found at lysine 176. The Microbody targeting signal signature appears at histidine 225–leucine 227.

This sequence belongs to the IPP isomerase type 1 family. As to quaternary structure, monomer. Mg(2+) serves as cofactor.

Its subcellular location is the peroxisome. The catalysed reaction is isopentenyl diphosphate = dimethylallyl diphosphate. Its pathway is isoprenoid biosynthesis; dimethylallyl diphosphate biosynthesis; dimethylallyl diphosphate from isopentenyl diphosphate: step 1/1. In terms of biological role, catalyzes the 1,3-allylic rearrangement of the homoallylic substrate isopentenyl (IPP) to its highly electrophilic allylic isomer, dimethylallyl diphosphate (DMAPP). The chain is Isopentenyl-diphosphate Delta-isomerase 1 (Idi1) from Mus musculus (Mouse).